The sequence spans 455 residues: Anaerobic glycerol-3-phosphate dehydrogenase subunit B (455 aa).

It belongs to the anaerobic G-3-P dehydrogenase subunit B family. Composed of a catalytic GlpA/B dimer and of membrane bound GlpC. FMN serves as cofactor.

The catalysed reaction is a quinone + sn-glycerol 3-phosphate = dihydroxyacetone phosphate + a quinol. It participates in polyol metabolism; glycerol degradation via glycerol kinase pathway; glycerone phosphate from sn-glycerol 3-phosphate (anaerobic route): step 1/1. In terms of biological role, conversion of glycerol 3-phosphate to dihydroxyacetone. Uses fumarate or nitrate as electron acceptor. The protein is Anaerobic glycerol-3-phosphate dehydrogenase subunit B of Aliivibrio fischeri (strain MJ11) (Vibrio fischeri).